A 274-amino-acid polypeptide reads, in one-letter code: Energy-coupling factor transporter ATP-binding protein EcfA1 (274 aa).

The region spanning 10-241 (ASFQGVYFSY…AAELQKIRLD (232 aa)) is the ABC transporter domain. 42-49 (GHNGSGKS) serves as a coordination point for ATP.

It belongs to the ABC transporter superfamily. Energy-coupling factor EcfA family. In terms of assembly, forms a stable energy-coupling factor (ECF) transporter complex composed of 2 membrane-embedded substrate-binding proteins (S component), 2 ATP-binding proteins (A component) and 2 transmembrane proteins (T component).

It localises to the cell membrane. Functionally, ATP-binding (A) component of a common energy-coupling factor (ECF) ABC-transporter complex. Unlike classic ABC transporters this ECF transporter provides the energy necessary to transport a number of different substrates. The chain is Energy-coupling factor transporter ATP-binding protein EcfA1 from Mycoplasma pneumoniae (strain ATCC 29342 / M129 / Subtype 1) (Mycoplasmoides pneumoniae).